The chain runs to 210 residues: dTTP/UTP pyrophosphatase (210 aa).

Asp-89 (proton acceptor) is an active-site residue.

The protein belongs to the Maf family. YhdE subfamily. A divalent metal cation is required as a cofactor.

It localises to the cytoplasm. The catalysed reaction is dTTP + H2O = dTMP + diphosphate + H(+). It carries out the reaction UTP + H2O = UMP + diphosphate + H(+). Nucleoside triphosphate pyrophosphatase that hydrolyzes dTTP and UTP. May have a dual role in cell division arrest and in preventing the incorporation of modified nucleotides into cellular nucleic acids. The sequence is that of dTTP/UTP pyrophosphatase from Burkholderia lata (strain ATCC 17760 / DSM 23089 / LMG 22485 / NCIMB 9086 / R18194 / 383).